The sequence spans 490 residues: Betaine aldehyde dehydrogenase (490 aa).

Positions 27 and 93 each coordinate K(+). 150-152 (GAW) lines the NAD(+) pocket. Lys162 serves as the catalytic Charge relay system. Residue 176 to 179 (KPSE) participates in NAD(+) binding. Residue Val180 participates in K(+) binding. 230–233 (GTDT) is a binding site for NAD(+). Leu246 is a binding site for K(+). Residue Glu252 is the Proton acceptor of the active site. Residues Gly254, Cys286, and Glu387 each coordinate NAD(+). Cys286 functions as the Nucleophile in the catalytic mechanism. A Cysteine sulfenic acid (-SOH) modification is found at Cys286. The K(+) site is built by Lys457 and Gly460. The active-site Charge relay system is the Glu464.

This sequence belongs to the aldehyde dehydrogenase family. In terms of assembly, dimer of dimers. The cofactor is K(+).

The catalysed reaction is betaine aldehyde + NAD(+) + H2O = glycine betaine + NADH + 2 H(+). It functions in the pathway amine and polyamine biosynthesis; betaine biosynthesis via choline pathway; betaine from betaine aldehyde: step 1/1. In terms of biological role, involved in the biosynthesis of the osmoprotectant glycine betaine. Catalyzes the irreversible oxidation of betaine aldehyde to the corresponding acid. The polypeptide is Betaine aldehyde dehydrogenase (Pseudomonas savastanoi pv. phaseolicola (strain 1448A / Race 6) (Pseudomonas syringae pv. phaseolicola (strain 1448A / Race 6))).